The primary structure comprises 503 residues: Maturase K (503 aa).

The protein belongs to the intron maturase 2 family. MatK subfamily.

The protein resides in the plastid. The protein localises to the chloroplast. Its function is as follows. Usually encoded in the trnK tRNA gene intron. Probably assists in splicing its own and other chloroplast group II introns. This Caragana arborescens (Siberian pea tree) protein is Maturase K.